Consider the following 129-residue polypeptide: Ribosome-binding factor A (129 aa).

This sequence belongs to the RbfA family. Monomer. Binds 30S ribosomal subunits, but not 50S ribosomal subunits or 70S ribosomes.

It localises to the cytoplasm. Its function is as follows. One of several proteins that assist in the late maturation steps of the functional core of the 30S ribosomal subunit. Associates with free 30S ribosomal subunits (but not with 30S subunits that are part of 70S ribosomes or polysomes). Required for efficient processing of 16S rRNA. May interact with the 5'-terminal helix region of 16S rRNA. The sequence is that of Ribosome-binding factor A from Stutzerimonas stutzeri (strain A1501) (Pseudomonas stutzeri).